Consider the following 60-residue polypeptide: Ribosome biogenesis protein Nop10 (60 aa).

The segment at 29–60 (CDGPTENSAPAPFSPEDPYGEYRRRVRRRASE) is disordered.

It belongs to the NOP10 family.

Its function is as follows. Involved in ribosome biogenesis; more specifically in 18S rRNA pseudouridylation and in cleavage of pre-rRNA. In Halorubrum lacusprofundi (strain ATCC 49239 / DSM 5036 / JCM 8891 / ACAM 34), this protein is Ribosome biogenesis protein Nop10.